A 503-amino-acid polypeptide reads, in one-letter code: CDK5 regulatory subunit-associated protein 3 (503 aa).

3 consecutive short sequence motifs (shuffled ATG8-binding motif) follow at residues 266 to 269 (IDWG), 288 to 291 (IDWG), and 306 to 309 (IDWG). The segment at 268-503 (WGDFGVEAVS…RPVNLMGTSL (236 aa)) is required for interaction with UFL1 and mediates interaction with CHEK1. The tract at residues 352-367 (DELMELEIFLSQRAVE) is RPL10a-binding domain (RBD). Residue K447 forms a Glycyl lysine isopeptide (Lys-Gly) (interchain with G-Cter in SUMO2) linkage.

Belongs to the CDK5RAP3 family. In terms of assembly, substrate adapter component of the UFM1 ribosome E3 ligase (UREL) complex, composed of UFL1, DDRGK1 and CDK5RAP3. Interaction with UFL1 anchors CDK5RAP3 in the cytoplasm, preventing its translocation to the nucleus which allows expression of the CCND1 cyclin and progression of cells through the G1/S transition. Interacts with ATG8 family proteins MAP1LC3A, MAP1LC3B, GABARAP, GABARAPL1 and GABARAPL2. Interacts with CDK5R1; competes with CDK5RAP1 and CDK5RAP2. Interacts with RELA. Interacts with CHEK1; may negatively regulate CHEK1 and thereby stimulate entry into mitosis. Interacts with CDKN2A/ARF and MDM2; forms a ternary complex involved in regulation of p53/TP53. Interacts with MAPK14. Interacts with CCNB1. Interacts with TUBG1; may regulate CDK5RAP3 in mitotic G2/M transition checkpoint. Post-translationally, may be phosphorylated by CDK5. In terms of processing, ubiquitinated. Probably triggers proteasomal degradation and is negatively regulated by UFL1. May be ufmylated. Post-translationally, cleaved by caspases early during apoptosis, the resulting peptides may play a role in rupture of the nuclear envelope. In terms of tissue distribution, widely expressed with higher expression in secretory tissues.

The protein localises to the endoplasmic reticulum membrane. It localises to the cytoplasm. It is found in the nucleus. The protein resides in the cytoskeleton. Its subcellular location is the microtubule organizing center. The protein localises to the centrosome. Its function is as follows. Substrate adapter of E3 ligase complexes mediating ufmylation, the covalent attachment of the ubiquitin-like modifier UFM1 to substrate proteins, and which is involved in various processes, such as ribosome recycling and reticulophagy (also called ER-phagy). As part of the UREL complex, plays a key role in ribosome recycling by promoting mono-ufmylation of RPL26/uL24 subunit of the 60S ribosome. Ufmylation of RPL26/uL24 occurs on free 60S ribosomes following ribosome dissociation: it weakens the junction between post-termination 60S subunits and SEC61 translocons, promoting release and recycling of the large ribosomal subunit from the endoplasmic reticulum membrane. Ufmylation of RPL26/uL24 and subsequent 60S ribosome recycling either take place after normal termination of translation or after ribosome stalling during cotranslational translocation at the endoplasmic reticulum. Within the UREL complex, CDK5RAP3 acts as a substrate adapter that constrains UFL1 ligase activity to mono-ufmylate RPL26/uL24 at 'Lys-134'. The UREL complex is also involved in reticulophagy in response to endoplasmic reticulum stress by promoting ufmylation of proteins such as CYB5R3, thereby promoting lysosomal degradation of ufmylated proteins. Also acts as a regulator of transcription: negatively regulates NF-kappa-B-mediated gene transcription through the control of RELA phosphorylation. Also regulates mitotic G2/M transition checkpoint and mitotic G2 DNA damage checkpoint. Through its interaction with CDKN2A/ARF and MDM2 may induce MDM2-dependent p53/TP53 ubiquitination, stabilization and activation in the nucleus, thereby promoting G1 cell cycle arrest and inhibition of cell proliferation. May also play a role in the rupture of the nuclear envelope during apoptosis. May regulate MAPK14 activity by regulating its dephosphorylation by PPM1D/WIP1. Required for liver development. In Mus musculus (Mouse), this protein is CDK5 regulatory subunit-associated protein 3.